The chain runs to 442 residues: Gamma-glutamyl phosphate reductase (442 aa).

It belongs to the gamma-glutamyl phosphate reductase family.

The protein resides in the cytoplasm. It catalyses the reaction L-glutamate 5-semialdehyde + phosphate + NADP(+) = L-glutamyl 5-phosphate + NADPH + H(+). The protein operates within amino-acid biosynthesis; L-proline biosynthesis; L-glutamate 5-semialdehyde from L-glutamate: step 2/2. Functionally, catalyzes the NADPH-dependent reduction of L-glutamate 5-phosphate into L-glutamate 5-semialdehyde and phosphate. The product spontaneously undergoes cyclization to form 1-pyrroline-5-carboxylate. This Campylobacter curvus (strain 525.92) protein is Gamma-glutamyl phosphate reductase.